The following is a 230-amino-acid chain: Cytochrome c oxidase subunit 2 (230 aa).

Topologically, residues 1-14 (MAHPSQLGFQDAAS) are mitochondrial intermembrane. A helical transmembrane segment spans residues 15 to 45 (PVMEELIHFHDHTLMIVFLISTLVLYIITAM). Residues 46–59 (VSTKLTNKYILDSQ) lie on the Mitochondrial matrix side of the membrane. The helical transmembrane segment at 60-87 (EIEIVWTILPAIILIMIALPSLRILYLM) threads the bilayer. The Mitochondrial intermembrane portion of the chain corresponds to 88-230 (DEINDPHLTI…TWSSLMLEEA (143 aa)). Positions 161, 196, 198, 200, 204, and 207 each coordinate Cu cation. Glu-198 is a Mg(2+) binding site.

This sequence belongs to the cytochrome c oxidase subunit 2 family. Component of the cytochrome c oxidase (complex IV, CIV), a multisubunit enzyme composed of 14 subunits. The complex is composed of a catalytic core of 3 subunits MT-CO1, MT-CO2 and MT-CO3, encoded in the mitochondrial DNA, and 11 supernumerary subunits COX4I, COX5A, COX5B, COX6A, COX6B, COX6C, COX7A, COX7B, COX7C, COX8 and NDUFA4, which are encoded in the nuclear genome. The complex exists as a monomer or a dimer and forms supercomplexes (SCs) in the inner mitochondrial membrane with NADH-ubiquinone oxidoreductase (complex I, CI) and ubiquinol-cytochrome c oxidoreductase (cytochrome b-c1 complex, complex III, CIII), resulting in different assemblies (supercomplex SCI(1)III(2)IV(1) and megacomplex MCI(2)III(2)IV(2)). Found in a complex with TMEM177, COA6, COX18, COX20, SCO1 and SCO2. Interacts with TMEM177 in a COX20-dependent manner. Interacts with COX20. Interacts with COX16. Cu cation is required as a cofactor.

The protein localises to the mitochondrion inner membrane. It catalyses the reaction 4 Fe(II)-[cytochrome c] + O2 + 8 H(+)(in) = 4 Fe(III)-[cytochrome c] + 2 H2O + 4 H(+)(out). Component of the cytochrome c oxidase, the last enzyme in the mitochondrial electron transport chain which drives oxidative phosphorylation. The respiratory chain contains 3 multisubunit complexes succinate dehydrogenase (complex II, CII), ubiquinol-cytochrome c oxidoreductase (cytochrome b-c1 complex, complex III, CIII) and cytochrome c oxidase (complex IV, CIV), that cooperate to transfer electrons derived from NADH and succinate to molecular oxygen, creating an electrochemical gradient over the inner membrane that drives transmembrane transport and the ATP synthase. Cytochrome c oxidase is the component of the respiratory chain that catalyzes the reduction of oxygen to water. Electrons originating from reduced cytochrome c in the intermembrane space (IMS) are transferred via the dinuclear copper A center (CU(A)) of subunit 2 and heme A of subunit 1 to the active site in subunit 1, a binuclear center (BNC) formed by heme A3 and copper B (CU(B)). The BNC reduces molecular oxygen to 2 water molecules using 4 electrons from cytochrome c in the IMS and 4 protons from the mitochondrial matrix. This chain is Cytochrome c oxidase subunit 2 (MT-CO2), found in Scyliorhinus canicula (Small-spotted catshark).